The sequence spans 196 residues: MKTIIVVTIFGILTCAYPTDGEHCAQEKAMEDFDPSRFFNGKWYVVHYGKTGPTVCQKFSTNGTQGAPTQIVETGYDKFEDYLKFQCDETGKKNDYHYSFKCKSYECGSDNIEFEVDFTVLSASYDDFALVCRTITFTSGTKDKDDEVLVLEREKTLDVIDNCRRTYYLTEFEKMSLSSQFLSKKENITMLSFQLK.

A signal peptide spans Met-1–Gly-21. Residues Asn-62 and Asn-187 are each glycosylated (N-linked (GlcNAc...) asparagine).

Belongs to the calycin superfamily. Triabin family. Salivary gland.

The protein localises to the secreted. Its function is as follows. Inhibits the intrinsic blood coagulation pathway by blocking the activation of host coagulation factor XII (F12) but not the enzymatic activity of activated F12. The sequence is that of Dimiconin from Triatoma dimidiata (Kissing bug).